The chain runs to 366 residues: Histidinol-phosphate aminotransferase (366 aa).

K231 carries the post-translational modification N6-(pyridoxal phosphate)lysine.

It belongs to the class-II pyridoxal-phosphate-dependent aminotransferase family. Histidinol-phosphate aminotransferase subfamily. The cofactor is pyridoxal 5'-phosphate.

It catalyses the reaction L-histidinol phosphate + 2-oxoglutarate = 3-(imidazol-4-yl)-2-oxopropyl phosphate + L-glutamate. It functions in the pathway amino-acid biosynthesis; L-histidine biosynthesis; L-histidine from 5-phospho-alpha-D-ribose 1-diphosphate: step 7/9. This is Histidinol-phosphate aminotransferase from Halobacterium salinarum (strain ATCC 29341 / DSM 671 / R1).